The sequence spans 208 residues: Outer-membrane lipoprotein carrier protein (208 aa).

Residues 1–22 form the signal peptide; that stretch reads MKKRLCAVLLASPLLFSAAVFA.

Belongs to the LolA family. Monomer.

Its subcellular location is the periplasm. In terms of biological role, participates in the translocation of lipoproteins from the inner membrane to the outer membrane. Only forms a complex with a lipoprotein if the residue after the N-terminal Cys is not an aspartate (The Asp acts as a targeting signal to indicate that the lipoprotein should stay in the inner membrane). The sequence is that of Outer-membrane lipoprotein carrier protein from Shewanella baltica (strain OS223).